A 190-amino-acid chain; its full sequence is Threonylcarbamoyl-AMP synthase (190 aa).

Residues 7–190 enclose the YrdC-like domain; sequence TGSIAAAVDL…ALTGELFRQG (184 aa).

Belongs to the SUA5 family. TsaC subfamily.

It is found in the cytoplasm. It carries out the reaction L-threonine + hydrogencarbonate + ATP = L-threonylcarbamoyladenylate + diphosphate + H2O. In terms of biological role, required for the formation of a threonylcarbamoyl group on adenosine at position 37 (t(6)A37) in tRNAs that read codons beginning with adenine. Catalyzes the conversion of L-threonine, HCO(3)(-)/CO(2) and ATP to give threonylcarbamoyl-AMP (TC-AMP) as the acyladenylate intermediate, with the release of diphosphate. This chain is Threonylcarbamoyl-AMP synthase, found in Salmonella choleraesuis (strain SC-B67).